The sequence spans 280 residues: MRFTKMHGLGNDYIYVNCFEETVENPSEVAKKVSDRHFGIGSDGLVLIMPSERADFKMRMFNSDGSEAEMCGNAIRCVGKYVFDRGMTNKNVIRVETLAGIKVLELTVQDGKAKLVKVDMGEPILKPENIPVNSDKEIFRTEPVEIDGKEFKVTCVSMGNPHAVSYVKNVDIFPLEKIGPKMEHHPLFPKRINAEFVEVIDRTTLKMRVWERGAGETLACGTGACAVLVASVLNGVSERKATVKLLGGDLIIEWNENNNHVYMTGPAVKVFEGEVDLNEL.

2 residues coordinate substrate: Asn11 and Asn62. Cys71 serves as the catalytic Proton donor. Substrate-binding positions include 72–73, Asn160, Asn193, and 211–212; these read GN and ER. Cys220 serves as the catalytic Proton acceptor. Residue 221-222 participates in substrate binding; the sequence is GT.

Belongs to the diaminopimelate epimerase family. In terms of assembly, homodimer.

Its subcellular location is the cytoplasm. It carries out the reaction (2S,6S)-2,6-diaminopimelate = meso-2,6-diaminopimelate. It functions in the pathway amino-acid biosynthesis; L-lysine biosynthesis via DAP pathway; DL-2,6-diaminopimelate from LL-2,6-diaminopimelate: step 1/1. Functionally, catalyzes the stereoinversion of LL-2,6-diaminopimelate (L,L-DAP) to meso-diaminopimelate (meso-DAP), a precursor of L-lysine and an essential component of the bacterial peptidoglycan. The sequence is that of Diaminopimelate epimerase from Acetivibrio thermocellus (strain ATCC 27405 / DSM 1237 / JCM 9322 / NBRC 103400 / NCIMB 10682 / NRRL B-4536 / VPI 7372) (Clostridium thermocellum).